A 111-amino-acid chain; its full sequence is Urease subunit beta (111 aa).

The protein belongs to the urease beta subunit family. Heterotrimer of UreA (gamma), UreB (beta) and UreC (alpha) subunits. Three heterotrimers associate to form the active enzyme.

The protein resides in the cytoplasm. It catalyses the reaction urea + 2 H2O + H(+) = hydrogencarbonate + 2 NH4(+). Its pathway is nitrogen metabolism; urea degradation; CO(2) and NH(3) from urea (urease route): step 1/1. The protein is Urease subunit beta of Psychrobacter cryohalolentis (strain ATCC BAA-1226 / DSM 17306 / VKM B-2378 / K5).